The primary structure comprises 356 residues: D-xylulose reductase (356 aa).

The Zn(2+) site is built by Cys44, His69, and Glu155. 179 to 184 (GAGPIG) provides a ligand contact to NAD(+).

The protein belongs to the zinc-containing alcohol dehydrogenase family. Zn(2+) serves as cofactor.

It carries out the reaction xylitol + NAD(+) = D-xylulose + NADH + H(+). Its pathway is carbohydrate degradation; L-arabinose degradation via L-arabinitol; D-xylulose 5-phosphate from L-arabinose (fungal route): step 4/5. The protein is D-xylulose reductase (XYL2) of Saccharomyces cerevisiae (strain ATCC 204508 / S288c) (Baker's yeast).